Here is a 264-residue protein sequence, read N- to C-terminus: Acyl-[acyl-carrier-protein]--UDP-N-acetylglucosamine O-acyltransferase (264 aa).

It belongs to the transferase hexapeptide repeat family. LpxA subfamily. In terms of assembly, homotrimer.

The protein localises to the cytoplasm. It catalyses the reaction a (3R)-hydroxyacyl-[ACP] + UDP-N-acetyl-alpha-D-glucosamine = a UDP-3-O-[(3R)-3-hydroxyacyl]-N-acetyl-alpha-D-glucosamine + holo-[ACP]. The protein operates within glycolipid biosynthesis; lipid IV(A) biosynthesis; lipid IV(A) from (3R)-3-hydroxytetradecanoyl-[acyl-carrier-protein] and UDP-N-acetyl-alpha-D-glucosamine: step 1/6. In terms of biological role, involved in the biosynthesis of lipid A, a phosphorylated glycolipid that anchors the lipopolysaccharide to the outer membrane of the cell. The sequence is that of Acyl-[acyl-carrier-protein]--UDP-N-acetylglucosamine O-acyltransferase from Rickettsia rickettsii.